We begin with the raw amino-acid sequence, 119 residues long: DNA-binding protein inhibitor ID-3 (119 aa).

Residues 28–80 (RGKSPSAEEPLSLLDDMNHCYSRLRELVPGVPRGTQLSQVEILQRVIDYILDL) enclose the bHLH domain.

Homodimer, and heterodimer with other HLH proteins. Interacts with COPS5 and COPS7A. Interacts with IFI204. Interacts with GATA4 and NKX2-5. Interacts with ANKRD2; both proteins cooperate in myoblast differentiation. Interacts with CLOCK and BMAL1. Phosphorylated in vitro by CDC2 and PKC.

It localises to the nucleus. Its function is as follows. Transcriptional regulator (lacking a basic DNA binding domain) which negatively regulates the basic helix-loop-helix (bHLH) transcription factors by forming heterodimers and inhibiting their DNA binding and transcriptional activity. Implicated in regulating a variety of cellular processes, including cellular growth, senescence, differentiation, apoptosis, angiogenesis, and neoplastic transformation. Involved in myogenesis by inhibiting skeletal muscle and cardiac myocyte differentiation and promoting muscle precursor cells proliferation. Inhibits the binding of E2A-containing protein complexes to muscle creatine kinase E-box enhancer. Regulates the circadian clock by repressing the transcriptional activator activity of the CLOCK-BMAL1 heterodimer. This is DNA-binding protein inhibitor ID-3 (Id3) from Rattus norvegicus (Rat).